Here is a 175-residue protein sequence, read N- to C-terminus: Adenine phosphoribosyltransferase (175 aa).

It belongs to the purine/pyrimidine phosphoribosyltransferase family. Homodimer.

The protein resides in the cytoplasm. The catalysed reaction is AMP + diphosphate = 5-phospho-alpha-D-ribose 1-diphosphate + adenine. Its pathway is purine metabolism; AMP biosynthesis via salvage pathway; AMP from adenine: step 1/1. Catalyzes a salvage reaction resulting in the formation of AMP, that is energically less costly than de novo synthesis. The chain is Adenine phosphoribosyltransferase from Lactobacillus johnsonii (strain CNCM I-12250 / La1 / NCC 533).